The primary structure comprises 107 residues: Iron-sulfur cluster assembly protein CyaY (107 aa).

The protein belongs to the frataxin family.

Its function is as follows. Involved in iron-sulfur (Fe-S) cluster assembly. May act as a regulator of Fe-S biogenesis. In Enterobacter sp. (strain 638), this protein is Iron-sulfur cluster assembly protein CyaY.